A 205-amino-acid polypeptide reads, in one-letter code: Pectinesterase inhibitor 3 (205 aa).

Positions 1–25 are cleaved as a signal peptide; it reads MAPTQNLFLVAIAFAVIFTASTVHG. Disulfide bonds link Cys-38–Cys-47 and Cys-104–Cys-156.

It belongs to the PMEI family. In terms of tissue distribution, expressed in apical meristem.

The protein resides in the secreted. It localises to the extracellular space. The protein localises to the apoplast. Its function is as follows. Pectin methylesterase (PME) inhibitor that can target PMEs (e.g. PME2 and PME3) in a pH-dependent manner, mainly in slightly acidic conditions (pH 6.3 and 5.0) but not at pH 7.5; this processus relies on changes in the protonation of amino acids involved in intermolecular and intramolecular interactions. Regulates de-methylesterification of pectins in the apical meristem and affects primordia formation and phyllotactic patterning. This chain is Pectinesterase inhibitor 3, found in Arabidopsis thaliana (Mouse-ear cress).